Reading from the N-terminus, the 190-residue chain is Negative regulator YfiR (190 aa).

R60 is a GMP binding site. 2 disulfides stabilise this stretch: C71–C110 and C145–C152. Positions 175 and 177 each coordinate GMP.

As to quaternary structure, homodimer. Interacts with TpbB/YfiN. Interacts with YfiB. The YfiB-YfiR complex is a 2:2 heterotetramer. Cys-71 and Cys-110 form a disulfide bond in the oxidized form but maintain their free form in the non-oxidized YfiR structure. The Cys-145-Cys-152 disulfide bond is well formed in both structures. The Cys145-Cys152 disulfide bond, but not Cys-71-Cys-110, plays an important role in maintaining the correct folding of the protein.

The protein localises to the periplasm. With respect to regulation, tpbB/YfiN repression is released through an YfiB-dependent sequestration of YfiR to the outer membrane. Binds vitamin B6 (VB6) or L-Trp at the periphery of the dimer, and both VB6 and L-Trp are able to reduce biofilm formation induced by YfiB L43P mutant. However, VB6 or L-Trp alone may have little effects in interrupting the YfiB-YfiR interaction. GMP enhances the binding affinity between YfiB and YfiR. Its function is as follows. Negatively regulates the activity of the diguanylate cyclase TpbB/YfiN, leading to decreased c-di-GMP production. Inhibits TpbB/YfiN allosterically, through a hydrophobic interaction between the C-terminus of YfiR and a conserved region of the periplasmic PAS domain of TpbB/YfiN. Under reducing conditions, may also act as an YfiB-independent sensing device that is able to activate TpbB/YfiN in response to the redox status of the periplasm. Functionally, part of the YfiB-TpbB-YfiR (or yfiBNR) system, encoding a tripartite signaling module that modulates intracellular c-di-GMP levels. The system is a key regulator of the small colony variant (SCV) phenotype, and plays an important role in biofilm formation and in vivo persistence. The c-di-GMP produced by TpbB/YfiN stimulates the production of the Pel and Psl exopolysaccharides, which promotes surface attachment, generates an SCV phenotype and confers resistance against phagocytosis. The chain is Negative regulator YfiR from Pseudomonas aeruginosa (strain ATCC 15692 / DSM 22644 / CIP 104116 / JCM 14847 / LMG 12228 / 1C / PRS 101 / PAO1).